The primary structure comprises 170 residues: Photosystem I assembly protein Ycf3 (170 aa).

TPR repeat units follow at residues 35–69 (AFTY…EIDP), 73–106 (SYIL…NPSL), and 121–154 (GEQA…APGN).

It belongs to the Ycf3 family.

Its subcellular location is the plastid. The protein resides in the chloroplast thylakoid membrane. Essential for the assembly of the photosystem I (PSI) complex. May act as a chaperone-like factor to guide the assembly of the PSI subunits. This Cycas taitungensis (Prince sago) protein is Photosystem I assembly protein Ycf3.